A 223-amino-acid polypeptide reads, in one-letter code: Urease accessory protein UreG (223 aa).

The segment at 1–30 (MAKHSHDHTHDHHDRPRRVRKPGEPLRIGV) is disordered. 32 to 39 (GPVGSGKT) serves as a coordination point for GTP.

Belongs to the SIMIBI class G3E GTPase family. UreG subfamily. In terms of assembly, homodimer. UreD, UreF and UreG form a complex that acts as a GTP-hydrolysis-dependent molecular chaperone, activating the urease apoprotein by helping to assemble the nickel containing metallocenter of UreC. The UreE protein probably delivers the nickel.

It localises to the cytoplasm. Its function is as follows. Facilitates the functional incorporation of the urease nickel metallocenter. This process requires GTP hydrolysis, probably effectuated by UreG. In Mycobacterium ulcerans (strain Agy99), this protein is Urease accessory protein UreG.